A 292-amino-acid chain; its full sequence is Sulfofructosephosphate aldolase (292 aa).

Lys193 acts as the Schiff-base intermediate with substrate in catalysis.

Belongs to the aldolase LacD family. Homotetramer.

The enzyme catalyses 6-deoxy-6-sulfo-D-fructose 1-phosphate = (2S)-3-sulfolactaldehyde + dihydroxyacetone phosphate. Its function is as follows. Cleaves 6-deoxy-6-sulfo-D-fructose 1-phosphate (SFP) to form dihydroxyacetone phosphate (DHAP) and 3-sulfolactaldehyde (SLA). This is Sulfofructosephosphate aldolase (yihT) from Escherichia coli O157:H7.